Consider the following 707-residue polypeptide: GDNF-inducible zinc finger protein 1 (707 aa).

Residues 31 to 103 enclose the BTB domain; the sequence is CDVTVIVDYQ…VYTARVRVKE (73 aa). Residues 149–165 show a composition bias toward polar residues; the sequence is VEASSGPQVSVTPSSKA. 2 disordered regions span residues 149-221 and 243-309; these read VEAS…PKIR and RRLR…KDGE. Basic and acidic residues-rich tracts occupy residues 198-213, 243-278, and 287-298; these read PSKKCKEKLDKKKDVA, RRLREQQKSAEEAAKNDKCPQDQSPDNERVEAEPAS, and VEREESLQKVEG. C2H2-type zinc fingers lie at residues 316–338, 347–370, 376–399, 406–428, 434–456, 462–484, 490–512, 518–540, 546–568, and 574–596; these read FQCTVCDKAFLYEKSFLKHIKYH, YRCDTCGQTFANRCNLKSHQRHVH, FPCEMCAKKFKRKKDVKRHVLQVH, HRCGQCGKGLSSKTALRLHERTH, YGCTKCDAKFSQPSALKTHLRVH, FVCDECGARFTQNHMLIYHKRCH, FMCETCGKSFASKEYLKHHNRIH, FKCEVCLRTFAQRNSLYQHIKVH, YCCDQCGKQFTQVNALQRHHRIH, and YMCNACGRTFTDKSTLRRHTSIH. At serine 612 the chain carries Phosphoserine.

The protein belongs to the krueppel C2H2-type zinc-finger protein family. In terms of assembly, interacts with NCL.

The protein resides in the cytoplasm. It is found in the nucleus. It localises to the nucleoplasm. The protein localises to the nucleolus. Functionally, transcriptional repressor that binds the GZF1 responsive element (GRE) (consensus: 5'-TGCGCN[TG][CA]TATA-3'). May be regulating VSX2/HOX10 expression. This Rattus norvegicus (Rat) protein is GDNF-inducible zinc finger protein 1 (Gzf1).